A 256-amino-acid chain; its full sequence is Homeobox-leucine zipper protein HOX28 (256 aa).

Residues 56–86 (ACSPGSPVSSGSGKRGSGSGSGDEVDDAGCD) form a disordered region. Residues 58 to 67 (SPGSPVSSGS) show a composition bias toward low complexity. The segment at residues 91 to 150 (GARKKLRLSKDQAAVLEECFKTHHTLTPKQKVALAKSLNLRPRQVEVWFQNRRARTKLKQ) is a DNA-binding region (homeobox). A leucine-zipper region spans residues 149–193 (KQTEVDCEHLKRWCDQLADDNRRLHKELAELRALKATPTPPAAAP).

The protein belongs to the HD-ZIP homeobox family. Class II subfamily. As to expression, expressed in seedlings, roots, stems and panicles.

It is found in the nucleus. Functionally, probable transcription factor. The protein is Homeobox-leucine zipper protein HOX28 (HOX28) of Oryza sativa subsp. indica (Rice).